A 346-amino-acid chain; its full sequence is Protein farnesyltransferase/geranylgeranyltransferase type-1 subunit alpha (346 aa).

5 PFTA repeats span residues 59 to 93, 94 to 128, 130 to 164, 165 to 198, and 205 to 239; these read RSTR…ALGV, DLRE…KLGA, AVTN…ALGG, WEDE…RSPL, and MREL…NDTQ.

Belongs to the protein prenyltransferase subunit alpha family. In terms of assembly, heterodimer of an alpha and a beta subunit. It depends on Mg(2+) as a cofactor.

It carries out the reaction L-cysteinyl-[protein] + (2E,6E)-farnesyl diphosphate = S-(2E,6E)-farnesyl-L-cysteinyl-[protein] + diphosphate. It catalyses the reaction geranylgeranyl diphosphate + L-cysteinyl-[protein] = S-geranylgeranyl-L-cysteinyl-[protein] + diphosphate. Functionally, essential subunit of both the farnesyltransferase and the geranylgeranyltransferase complex. Contributes to the transfer of a farnesyl or geranylgeranyl moiety from farnesyl or geranylgeranyl diphosphate to a cysteine at the fourth position from the C-terminus of several proteins having the C-terminal sequence Cys-aliphatic-aliphatic-X. This is Protein farnesyltransferase/geranylgeranyltransferase type-1 subunit alpha (FTA) from Solanum lycopersicum (Tomato).